A 375-amino-acid chain; its full sequence is Growth/differentiation factor 8 (375 aa).

The first 23 residues, 1-23, serve as a signal peptide directing secretion; sequence MQKLQLCVYIYLFMLIVAGPVDL. A propeptide spanning residues 24–266 is cleaved from the precursor; that stretch reads NENSEQKENV…VTDTPKRSRR (243 aa). Residue Asn71 is glycosylated (N-linked (GlcNAc...) asparagine). Intrachain disulfides connect Cys272–Cys282, Cys281–Cys340, Cys309–Cys372, and Cys313–Cys374.

This sequence belongs to the TGF-beta family. In terms of assembly, homodimer; disulfide-linked. Interacts with WFIKKN2, leading to inhibit its activity. Interacts with FST3. Synthesized as large precursor molecule that undergoes proteolytic cleavage to generate an N-terminal propeptide and a disulfide linked C-terminal dimer, which is the biologically active molecule. The circulating form consists of a latent complex of the C-terminal dimer and other proteins, including its propeptide, which maintain the C-terminal dimer in a latent, inactive state. Ligand activation requires additional cleavage of the prodomain by a tolloid-like metalloproteinase.

The protein resides in the secreted. Functionally, acts specifically as a negative regulator of skeletal muscle growth. This chain is Growth/differentiation factor 8 (MSTN), found in Homo sapiens (Human).